The primary structure comprises 279 residues: NADPH-dependent 7-cyano-7-deazaguanine reductase (279 aa).

86 to 88 (IES) is a binding site for substrate. 88–89 (SK) provides a ligand contact to NADPH. Cys187 acts as the Thioimide intermediate in catalysis. Asp194 (proton donor) is an active-site residue. A substrate-binding site is contributed by 226-227 (HE). An NADPH-binding site is contributed by 255–256 (RG).

Belongs to the GTP cyclohydrolase I family. QueF type 2 subfamily. As to quaternary structure, homodimer.

The protein resides in the cytoplasm. The catalysed reaction is 7-aminomethyl-7-carbaguanine + 2 NADP(+) = 7-cyano-7-deazaguanine + 2 NADPH + 3 H(+). Its pathway is tRNA modification; tRNA-queuosine biosynthesis. Its function is as follows. Catalyzes the NADPH-dependent reduction of 7-cyano-7-deazaguanine (preQ0) to 7-aminomethyl-7-deazaguanine (preQ1). The protein is NADPH-dependent 7-cyano-7-deazaguanine reductase of Actinobacillus pleuropneumoniae serotype 5b (strain L20).